We begin with the raw amino-acid sequence, 257 residues long: NAD-capped RNA hydrolase NudC (257 aa).

Arg69 lines the substrate pocket. Positions 98 and 101 each coordinate Zn(2+). Glu111 serves as a coordination point for substrate. Zn(2+) contacts are provided by Cys116 and Cys119. Tyr124 is a substrate binding site. In terms of domain architecture, Nudix hydrolase spans Pro125–Thr248. A divalent metal cation is bound by residues Ala158, Glu174, and Glu178. The Nudix box signature appears at Gly159–Gly180. Gln192–Ser199 lines the substrate pocket. Glu219 serves as a coordination point for a divalent metal cation. Ala241 contributes to the substrate binding site.

Belongs to the Nudix hydrolase family. NudC subfamily. Homodimer. The cofactor is Mg(2+). Mn(2+) is required as a cofactor. Zn(2+) serves as cofactor.

It catalyses the reaction a 5'-end NAD(+)-phospho-ribonucleoside in mRNA + H2O = a 5'-end phospho-adenosine-phospho-ribonucleoside in mRNA + beta-nicotinamide D-ribonucleotide + 2 H(+). It carries out the reaction NAD(+) + H2O = beta-nicotinamide D-ribonucleotide + AMP + 2 H(+). The enzyme catalyses NADH + H2O = reduced beta-nicotinamide D-ribonucleotide + AMP + 2 H(+). MRNA decapping enzyme that specifically removes the nicotinamide adenine dinucleotide (NAD) cap from a subset of mRNAs by hydrolyzing the diphosphate linkage to produce nicotinamide mononucleotide (NMN) and 5' monophosphate mRNA. The NAD-cap is present at the 5'-end of some mRNAs and stabilizes RNA against 5'-processing. Has preference for mRNAs with a 5'-end purine. Catalyzes the hydrolysis of a broad range of dinucleotide pyrophosphates. This Salmonella choleraesuis (strain SC-B67) protein is NAD-capped RNA hydrolase NudC.